The following is a 290-amino-acid chain: 4-diphosphocytidyl-2-C-methyl-D-erythritol kinase (290 aa).

Residue Lys11 is part of the active site. 97–107 is a binding site for ATP; the sequence is PVAAGIGGGSS. Residue Asp139 is part of the active site.

This sequence belongs to the GHMP kinase family. IspE subfamily.

It carries out the reaction 4-CDP-2-C-methyl-D-erythritol + ATP = 4-CDP-2-C-methyl-D-erythritol 2-phosphate + ADP + H(+). It functions in the pathway isoprenoid biosynthesis; isopentenyl diphosphate biosynthesis via DXP pathway; isopentenyl diphosphate from 1-deoxy-D-xylulose 5-phosphate: step 3/6. Catalyzes the phosphorylation of the position 2 hydroxy group of 4-diphosphocytidyl-2C-methyl-D-erythritol. The sequence is that of 4-diphosphocytidyl-2-C-methyl-D-erythritol kinase from Methylobacterium radiotolerans (strain ATCC 27329 / DSM 1819 / JCM 2831 / NBRC 15690 / NCIMB 10815 / 0-1).